A 427-amino-acid chain; its full sequence is Transcription factor MYB98 (427 aa).

A Nuclear localization signal 1 motif is present at residues 195 to 202 (TRKLSSSS). HTH myb-type domains are found at residues 212–267 (KSTL…RPDI) and 268–318 (KKET…RRQF). 2 consecutive DNA-binding regions (H-T-H motif) follow at residues 240 to 263 (WSHI…HNHL) and 291 to 314 (WAEI…NATK). Positions 361–368 (NKKKDVVV) match the Nuclear localization signal 2 motif.

In terms of tissue distribution, expressed at high levels in the synergid cells of the female gametophyte, and at lower levels in the endosperm of young seeds and the trichomes of young leaves and sepals.

The protein localises to the nucleus. In terms of biological role, transcription factor that binds to the motif 5'-GTAACNT-3' in the promoter of target genes (e.g. DD11 and DD18) and promotes their expression within synergid cells (e.g. in the filiform apparatus) in ovules. Required for the formation of the filiform apparatus during synergid cell differentiation in the female gametophyte. Involved in pollen tube guidance to the micropyle. The polypeptide is Transcription factor MYB98 (Arabidopsis thaliana (Mouse-ear cress)).